We begin with the raw amino-acid sequence, 341 residues long: Nicotinate-nucleotide--dimethylbenzimidazole phosphoribosyltransferase (341 aa).

Glutamate 306 acts as the Proton acceptor in catalysis.

This sequence belongs to the CobT family.

It carries out the reaction 5,6-dimethylbenzimidazole + nicotinate beta-D-ribonucleotide = alpha-ribazole 5'-phosphate + nicotinate + H(+). It functions in the pathway nucleoside biosynthesis; alpha-ribazole biosynthesis; alpha-ribazole from 5,6-dimethylbenzimidazole: step 1/2. Functionally, catalyzes the synthesis of alpha-ribazole-5'-phosphate from nicotinate mononucleotide (NAMN) and 5,6-dimethylbenzimidazole (DMB). The sequence is that of Nicotinate-nucleotide--dimethylbenzimidazole phosphoribosyltransferase from Methylocella silvestris (strain DSM 15510 / CIP 108128 / LMG 27833 / NCIMB 13906 / BL2).